The chain runs to 184 residues: Large ribosomal subunit protein bL9 (184 aa).

The tract at residues 160–184 is disordered; sequence LQNQKSEQQEAEQDANKEATDGDDS. Residues 173 to 184 are compositionally biased toward basic and acidic residues; that stretch reads DANKEATDGDDS.

The protein belongs to the bacterial ribosomal protein bL9 family.

Functionally, binds to the 23S rRNA. The protein is Large ribosomal subunit protein bL9 of Wolbachia pipientis wMel.